Here is a 602-residue protein sequence, read N- to C-terminus: Elongation factor 4 (602 aa).

The region spanning 6–188 is the tr-type G domain; sequence KYIRNFCIIA…AIIRRVPPPR (183 aa). GTP is bound by residues 18–23 and 135–138; these read DHGKST and NKID.

It belongs to the TRAFAC class translation factor GTPase superfamily. Classic translation factor GTPase family. LepA subfamily.

It localises to the cell membrane. It carries out the reaction GTP + H2O = GDP + phosphate + H(+). Functionally, required for accurate and efficient protein synthesis under certain stress conditions. May act as a fidelity factor of the translation reaction, by catalyzing a one-codon backward translocation of tRNAs on improperly translocated ribosomes. Back-translocation proceeds from a post-translocation (POST) complex to a pre-translocation (PRE) complex, thus giving elongation factor G a second chance to translocate the tRNAs correctly. Binds to ribosomes in a GTP-dependent manner. The chain is Elongation factor 4 from Moorella thermoacetica (strain ATCC 39073 / JCM 9320).